A 74-amino-acid chain; its full sequence is ATP synthase subunit c (74 aa).

2 helical membrane passes run 5-25 (LAHI…IGVG) and 49-69 (LFIG…VALL).

The protein belongs to the ATPase C chain family. F-type ATPases have 2 components, F(1) - the catalytic core - and F(0) - the membrane proton channel. F(1) has five subunits: alpha(3), beta(3), gamma(1), delta(1), epsilon(1). F(0) has three main subunits: a(1), b(2) and c(10-14). The alpha and beta chains form an alternating ring which encloses part of the gamma chain. F(1) is attached to F(0) by a central stalk formed by the gamma and epsilon chains, while a peripheral stalk is formed by the delta and b chains.

The protein localises to the cell inner membrane. Its function is as follows. F(1)F(0) ATP synthase produces ATP from ADP in the presence of a proton or sodium gradient. F-type ATPases consist of two structural domains, F(1) containing the extramembraneous catalytic core and F(0) containing the membrane proton channel, linked together by a central stalk and a peripheral stalk. During catalysis, ATP synthesis in the catalytic domain of F(1) is coupled via a rotary mechanism of the central stalk subunits to proton translocation. In terms of biological role, key component of the F(0) channel; it plays a direct role in translocation across the membrane. A homomeric c-ring of between 10-14 subunits forms the central stalk rotor element with the F(1) delta and epsilon subunits. This is ATP synthase subunit c from Ruegeria pomeroyi (strain ATCC 700808 / DSM 15171 / DSS-3) (Silicibacter pomeroyi).